The following is a 158-amino-acid chain: Transcription elongation factor GreA (158 aa).

This sequence belongs to the GreA/GreB family.

In terms of biological role, necessary for efficient RNA polymerase transcription elongation past template-encoded arresting sites. The arresting sites in DNA have the property of trapping a certain fraction of elongating RNA polymerases that pass through, resulting in locked ternary complexes. Cleavage of the nascent transcript by cleavage factors such as GreA or GreB allows the resumption of elongation from the new 3'terminus. GreA releases sequences of 2 to 3 nucleotides. The sequence is that of Transcription elongation factor GreA from Verminephrobacter eiseniae (strain EF01-2).